Here is a 293-residue protein sequence, read N- to C-terminus: tRNA pseudouridine synthase B (293 aa).

Residue Asp38 is the Nucleophile of the active site.

It belongs to the pseudouridine synthase TruB family. Type 1 subfamily.

It carries out the reaction uridine(55) in tRNA = pseudouridine(55) in tRNA. Functionally, responsible for synthesis of pseudouridine from uracil-55 in the psi GC loop of transfer RNAs. The protein is tRNA pseudouridine synthase B of Solibacter usitatus (strain Ellin6076).